The following is a 414-amino-acid chain: tRNA methyltransferase 10 homolog C (414 aa).

Residues 1 to 35 (MNVTVRFLRPFARYLVPYTFHRTRSNSYSRVLQRY) constitute a mitochondrion transit peptide. S79 is modified (phosphoserine). Residues 133 to 162 (GKEMMKKAKQMKKEMKAAAREEAKRARSLE) are a coiled coil. One can recognise an SAM-dependent MTase TRM10-type domain in the interval 186 to 378 (LGWKGVQAMQ…KFVPRRKHTG (193 aa)).

It belongs to the class IV-like SAM-binding methyltransferase superfamily. TRM10 family. As to quaternary structure, component of mitochondrial ribonuclease P, a complex composed of TRMT10C/MRPP1, HSD17B10/MRPP2 and PRORP/MRPP3. Interacts with HSD17B10/MRPP2; forming the MRPP1-MRPP2 subcomplex of the mitochondrial ribonuclease P complex. Interacts with GRSF1.

Its subcellular location is the mitochondrion matrix. The protein localises to the mitochondrion nucleoid. It carries out the reaction adenosine(9) in tRNA + S-adenosyl-L-methionine = N(1)-methyladenosine(9) in tRNA + S-adenosyl-L-homocysteine + H(+). It catalyses the reaction guanosine(9) in tRNA + S-adenosyl-L-methionine = N(1)-methylguanosine(9) in tRNA + S-adenosyl-L-homocysteine + H(+). The catalysed reaction is an adenosine in mRNA + S-adenosyl-L-methionine = an N(1)-methyladenosine in mRNA + S-adenosyl-L-homocysteine + H(+). Functionally, mitochondrial tRNA N(1)-methyltransferase involved in mitochondrial tRNA maturation. Component of mitochondrial ribonuclease P, a complex composed of TRMT10C/MRPP1, HSD17B10/MRPP2 and PRORP/MRPP3, which cleaves tRNA molecules in their 5'-ends. Together with HSD17B10/MRPP2, forms a subcomplex of the mitochondrial ribonuclease P, named MRPP1-MRPP2 subcomplex, which displays functions that are independent of the ribonuclease P activity. The MRPP1-MRPP2 subcomplex catalyzes the formation of N(1)-methylguanine and N(1)-methyladenine at position 9 (m1G9 and m1A9, respectively) in tRNAs; TRMT10C/MRPP1 acting as the catalytic N(1)-methyltransferase subunit. The MRPP1-MRPP2 subcomplex also acts as a tRNA maturation platform: following 5'-end cleavage by the mitochondrial ribonuclease P complex, the MRPP1-MRPP2 subcomplex enhances the efficiency of 3'-processing catalyzed by ELAC2, retains the tRNA product after ELAC2 processing and presents the nascent tRNA to the mitochondrial CCA tRNA nucleotidyltransferase TRNT1 enzyme. In addition to tRNA N(1)-methyltransferase activity, TRMT10C/MRPP1 also acts as a mRNA N(1)-methyltransferase by mediating methylation of adenosine residues at the N(1) position of MT-ND5 mRNA. Associates with mitochondrial DNA complexes at the nucleoids to initiate RNA processing and ribosome assembly. The chain is tRNA methyltransferase 10 homolog C from Rattus norvegicus (Rat).